A 341-amino-acid chain; its full sequence is Putative UPF0607 protein FLJ37424 (341 aa).

2 disordered regions span residues 72-131 (PKTE…NPRP) and 216-283 (GLLM…LPCL). Residues 79 to 101 (EEPKEATEVKDQVETQGQEDNKR) are compositionally biased toward basic and acidic residues. Residues 108-127 (EAASTSRPLETQGNLTSSWY) show a composition bias toward polar residues. Residues 243–252 (AGHRSHKRKL) show a composition bias toward basic residues.

The protein belongs to the UPF0607 family.

This Homo sapiens (Human) protein is Putative UPF0607 protein FLJ37424.